The following is a 443-amino-acid chain: ATP-dependent protease ATPase subunit HslU (443 aa).

Residues Ile18 and 60-65 (GVGKTE) contribute to the ATP site. A disordered region spans residues 141-165 (DQWGQNEENDTDSSTRQSFRKKLRE). ATP is bound by residues Asp256, Glu321, and Arg393.

This sequence belongs to the ClpX chaperone family. HslU subfamily. A double ring-shaped homohexamer of HslV is capped on each side by a ring-shaped HslU homohexamer. The assembly of the HslU/HslV complex is dependent on binding of ATP.

It is found in the cytoplasm. ATPase subunit of a proteasome-like degradation complex; this subunit has chaperone activity. The binding of ATP and its subsequent hydrolysis by HslU are essential for unfolding of protein substrates subsequently hydrolyzed by HslV. HslU recognizes the N-terminal part of its protein substrates and unfolds these before they are guided to HslV for hydrolysis. This is ATP-dependent protease ATPase subunit HslU from Photobacterium profundum (strain SS9).